The following is a 386-amino-acid chain: Adiponectin receptor protein 2 (386 aa).

The interval Met-1–Glu-71 is disordered. Topologically, residues Met-1–Gly-147 are cytoplasmic. Positions Pro-15–Asp-41 are enriched in basic and acidic residues. A helical membrane pass occupies residues Asn-148–Phe-168. The Extracellular portion of the chain corresponds to Arg-169–Lys-181. A helical membrane pass occupies residues Val-182–His-202. His-202 contacts Zn(2+). The Cytoplasmic portion of the chain corresponds to Thr-203 to Arg-213. The chain crosses the membrane as a helical span at residues Leu-214–Trp-234. Residues Leu-235–Pro-245 are Extracellular-facing. The chain crosses the membrane as a helical span at residues Cys-246–Trp-266. Residues Asp-267 to Gln-273 are Cytoplasmic-facing. Residues Tyr-274–Leu-294 traverse the membrane as a helical segment. The Extracellular portion of the chain corresponds to His-295–Gly-309. The chain crosses the membrane as a helical span at residues Gln-310–Ala-330. At Arg-331–His-348 the chain is on the cytoplasmic side. The Zn(2+) site is built by His-348 and His-352. Residues Gln-349–Leu-369 traverse the membrane as a helical segment. Residues Gln-370–Leu-386 are Extracellular-facing.

Belongs to the ADIPOR family. As to quaternary structure, may form homooligomers and heterooligomers with ADIPOR1. Interacts with APPL2 (via BAR domain); ADIPOQ dissociates this interaction. As to expression, ubiquitous. Highly expressed in skeletal muscle, liver and placenta. Weakly expressed in brain, heart, colon, spleen, kidney, thymus, small intestine, peripheral blood leukocytes and lung.

The protein resides in the cell membrane. Functionally, receptor for ADIPOQ, an essential hormone secreted by adipocytes that regulates glucose and lipid metabolism. Required for normal body fat and glucose homeostasis. ADIPOQ-binding activates a signaling cascade that leads to increased PPARA activity, and ultimately to increased fatty acid oxidation and glucose uptake. Has intermediate affinity for globular and full-length adiponectin. Required for normal revascularization after chronic ischemia caused by severing of blood vessels. The sequence is that of Adiponectin receptor protein 2 from Homo sapiens (Human).